Here is a 972-residue protein sequence, read N- to C-terminus: SWI/SNF-related matrix-associated actin-dependent regulator of chromatin subfamily A containing DEAD/H box 1A (972 aa).

3 disordered regions span residues 15–76 (NAVG…SDLQ), 125–177 (DEDS…EKQE), and 217–333 (SSTD…EDSI). Basic and acidic residues-rich tracts occupy residues 22-42 (KSPD…RKAD) and 63-72 (EVVRMGKDSA). Positions 82–127 (DMEDKIIKLLEIFPQKSKKDLLEVIENTSTLDGAVAHCLMIYGDED) constitute a CUE 1 domain. Residues 128–138 (SGGRKDKGGRS) are compositionally biased toward basic and acidic residues. Residues 156–169 (SESEDEDSEDEESE) show a composition bias toward acidic residues. A CUE 2 domain is found at 175-218 (KQEALLKKLKRKLPDIEKEVLRDILKEHDWDYENALGSLLVFSS). Positions 237–246 (HSKEKTDKIT) are enriched in basic and acidic residues. Positions 247–263 (QRPSGSSSLSRWLTAAS) are enriched in polar residues. Positions 279–290 (KSALSKSTSKNS) are enriched in low complexity. Residues 307-332 (ASEDEDEIDSDVDSMSDDQDSEDEDS) show a composition bias toward acidic residues. The region spanning 460–628 (ILLHQHKLSG…MSLLNFIMPS (169 aa)) is the Helicase ATP-binding domain. Position 473-480 (473-480 (DEMGLGKT)) interacts with ATP. A DEGH box motif is present at residues 579 to 582 (DEGH). The Helicase C-terminal domain maps to 805–966 (LLTKTLAKLK…AITEQMAELL (162 aa)).

Belongs to the SNF2/RAD54 helicase family.

Its subcellular location is the nucleus. It is found in the chromosome. It catalyses the reaction ATP + H2O = ADP + phosphate + H(+). Its function is as follows. DNA helicase that possesses intrinsic ATP-dependent nucleosome-remodeling activity and is both required for DNA repair and heterochromatin organization. Promotes DNA end resection of double-strand breaks (DSBs) following DNA damage: probably acts by weakening histone DNA interactions in nucleosomes flanking DSBs. Required for the restoration of heterochromatin organization after replication. This chain is SWI/SNF-related matrix-associated actin-dependent regulator of chromatin subfamily A containing DEAD/H box 1A (smarcad1a), found in Danio rerio (Zebrafish).